Consider the following 299-residue polypeptide: Lipoyl synthase (299 aa).

Positions 45, 50, 56, 71, 75, 78, and 284 each coordinate [4Fe-4S] cluster. The 217-residue stretch at 57 to 273 (YSKGTATFMI…GDVALAKDFL (217 aa)) folds into the Radical SAM core domain.

Belongs to the radical SAM superfamily. Lipoyl synthase family. It depends on [4Fe-4S] cluster as a cofactor.

The protein resides in the cytoplasm. It carries out the reaction [[Fe-S] cluster scaffold protein carrying a second [4Fe-4S](2+) cluster] + N(6)-octanoyl-L-lysyl-[protein] + 2 oxidized [2Fe-2S]-[ferredoxin] + 2 S-adenosyl-L-methionine + 4 H(+) = [[Fe-S] cluster scaffold protein] + N(6)-[(R)-dihydrolipoyl]-L-lysyl-[protein] + 4 Fe(3+) + 2 hydrogen sulfide + 2 5'-deoxyadenosine + 2 L-methionine + 2 reduced [2Fe-2S]-[ferredoxin]. Its pathway is protein modification; protein lipoylation via endogenous pathway; protein N(6)-(lipoyl)lysine from octanoyl-[acyl-carrier-protein]: step 2/2. Functionally, catalyzes the radical-mediated insertion of two sulfur atoms into the C-6 and C-8 positions of the octanoyl moiety bound to the lipoyl domains of lipoate-dependent enzymes, thereby converting the octanoylated domains into lipoylated derivatives. The protein is Lipoyl synthase of Desulfotalea psychrophila (strain LSv54 / DSM 12343).